The chain runs to 417 residues: Serine--tRNA ligase (417 aa).

226-228 (TSE) lines the L-serine pocket. Residues 257–259 (RRE) and V273 contribute to the ATP site. E280 contacts L-serine. 344-347 (ELTS) is a binding site for ATP. Residue T379 participates in L-serine binding.

Belongs to the class-II aminoacyl-tRNA synthetase family. Type-1 seryl-tRNA synthetase subfamily. As to quaternary structure, homodimer. The tRNA molecule binds across the dimer.

The protein localises to the cytoplasm. The catalysed reaction is tRNA(Ser) + L-serine + ATP = L-seryl-tRNA(Ser) + AMP + diphosphate + H(+). The enzyme catalyses tRNA(Sec) + L-serine + ATP = L-seryl-tRNA(Sec) + AMP + diphosphate + H(+). Its pathway is aminoacyl-tRNA biosynthesis; selenocysteinyl-tRNA(Sec) biosynthesis; L-seryl-tRNA(Sec) from L-serine and tRNA(Sec): step 1/1. Its function is as follows. Catalyzes the attachment of serine to tRNA(Ser). Is also able to aminoacylate tRNA(Sec) with serine, to form the misacylated tRNA L-seryl-tRNA(Sec), which will be further converted into selenocysteinyl-tRNA(Sec). The sequence is that of Serine--tRNA ligase from Mycolicibacterium smegmatis (strain ATCC 700084 / mc(2)155) (Mycobacterium smegmatis).